The following is a 1208-amino-acid chain: Putative protease AXL1 (1208 aa).

Histidine 68 contributes to the Zn(2+) binding site. Glutamate 71 (proton acceptor) is an active-site residue. Residues histidine 72 and glutamate 156 each coordinate Zn(2+). The residue at position 262 (serine 262) is a Phosphoserine.

This sequence belongs to the peptidase M16 family. Interacts with BUD5. The cofactor is Zn(2+).

The protein localises to the bud neck. In terms of biological role, probable protease. Involved in axial budding. The polypeptide is Putative protease AXL1 (AXL1) (Saccharomyces cerevisiae (strain ATCC 204508 / S288c) (Baker's yeast)).